Consider the following 104-residue polypeptide: MEFKVGQDVSEIWNIHGSILPEVLMYMFPRSDESYDWEFVNDNGRHIFTAWRKSEPIPTLEEIEKAAIELEEKKNAPKPKTLEERVADLEKQVAYLTSKVEGTN.

The protein resides in the cytoplasm. This chain is SPbeta prophage-derived stress response protein SCP1 (yorD), found in Bacillus subtilis (strain 168).